Here is a 267-residue protein sequence, read N- to C-terminus: tRNA (guanine-N(1)-)-methyltransferase (267 aa).

S-adenosyl-L-methionine-binding positions include Gly-112 and 131-136; that span reads IGDYIL. Positions 245–259 are enriched in basic and acidic residues; that stretch reads DRRKEKNSYEDEFNR. The disordered stretch occupies residues 245–267; sequence DRRKEKNSYEDEFNRRNYKRSTS.

This sequence belongs to the RNA methyltransferase TrmD family. Homodimer.

Its subcellular location is the cytoplasm. The enzyme catalyses guanosine(37) in tRNA + S-adenosyl-L-methionine = N(1)-methylguanosine(37) in tRNA + S-adenosyl-L-homocysteine + H(+). Functionally, specifically methylates guanosine-37 in various tRNAs. The polypeptide is tRNA (guanine-N(1)-)-methyltransferase (Spiroplasma kunkelii).